A 155-amino-acid polypeptide reads, in one-letter code: Small ribosomal subunit protein uS7 (155 aa).

Belongs to the universal ribosomal protein uS7 family. In terms of assembly, part of the 30S ribosomal subunit. Contacts proteins S9 and S11.

In terms of biological role, one of the primary rRNA binding proteins, it binds directly to 16S rRNA where it nucleates assembly of the head domain of the 30S subunit. Is located at the subunit interface close to the decoding center, probably blocks exit of the E-site tRNA. This is Small ribosomal subunit protein uS7 from Xanthomonas oryzae pv. oryzae (strain MAFF 311018).